The primary structure comprises 22 residues: Protein YncP (22 aa).

This chain is Protein YncP, found in Escherichia coli (strain K12).